The following is a 295-amino-acid chain: Ribosomal protein L11 methyltransferase (295 aa).

S-adenosyl-L-methionine is bound by residues threonine 150, glycine 171, aspartate 193, and asparagine 232.

Belongs to the methyltransferase superfamily. PrmA family.

The protein localises to the cytoplasm. The catalysed reaction is L-lysyl-[protein] + 3 S-adenosyl-L-methionine = N(6),N(6),N(6)-trimethyl-L-lysyl-[protein] + 3 S-adenosyl-L-homocysteine + 3 H(+). Methylates ribosomal protein L11. The chain is Ribosomal protein L11 methyltransferase from Neisseria meningitidis serogroup C / serotype 2a (strain ATCC 700532 / DSM 15464 / FAM18).